The chain runs to 297 residues: MTFQKAIVTEAPHRARLVSDRLIPKLRDDYILVRTVSVALNPTDWKHILRLSPPGCLVGCDYAGIVEEVGRSVKKPFKKGDRVCGFAHGGNAVFSDDGTFAEVITVKGDIQAWIPENLSFQEAATLGVGIKTVGQGLYQSLKLSWPTTPIEHAVPILIYGGSTATGTLAIQLAKLSGYRVITTCSPHHFELMKSLGADLVFDYHEITSADHIRRCTQNKLKLVFDTISIDVSARFCDRAMSTEGGEYSALLDVSIARTNISSRWTLAYTVLGEGFTSEQIVFQPYPTTMSSGRNFGM.

Residues 162 to 165 and Y203 each bind NADP(+); that span reads STAT.

It belongs to the zinc-containing alcohol dehydrogenase family. As to quaternary structure, monomer.

Its function is as follows. Trans-enoyl reductase; part of the diffuse TOX2 gene cluster that mediates the biosynthesis of the HC-toxin, cyclic tetrapeptide of structure cyclo(D-Pro-L-Ala-D-Ala-L-Aeo), where Aeo stands for 2-amino-9,10-epoxi-8-oxodecanoic acid. HC-toxin is a determinant of specificity and virulence in the interaction between the producing fungus and its host, maize. TOXD does not seem to play a role in HC-toxin biosynthesis. This Cochliobolus carbonum (Maize leaf spot fungus) protein is Trans-enoyl reductase TOXD.